Here is an 85-residue protein sequence, read N- to C-terminus: Small ribosomal subunit protein uS17 (85 aa).

This sequence belongs to the universal ribosomal protein uS17 family. As to quaternary structure, part of the 30S ribosomal subunit.

Functionally, one of the primary rRNA binding proteins, it binds specifically to the 5'-end of 16S ribosomal RNA. The chain is Small ribosomal subunit protein uS17 from Haemophilus influenzae (strain 86-028NP).